We begin with the raw amino-acid sequence, 542 residues long: 4-coumarate--CoA ligase 2 (542 aa).

The ATP site is built by serine 189, serine 190, glycine 191, threonine 192, threonine 193, and lysine 197. The (E)-4-coumaroyl-AMP site is built by tyrosine 239 and serine 243. (E)-caffeoyl-AMP-binding residues include tyrosine 239 and serine 243. Residues tyrosine 239 and serine 243 each coordinate (E)-feruloyl-AMP. Lysine 260 lines the CoA pocket. The tract at residues 262–331 is SBD1; sequence DIVSFLELIQ…AKFPNAKLGQ (70 aa). Alanine 309 is a (E)-4-coumaroyl-AMP binding site. (E)-caffeoyl-AMP is bound at residue alanine 309. Alanine 309 contacts (E)-feruloyl-AMP. Glutamine 331, glycine 332, and threonine 336 together coordinate ATP. (E)-4-coumaroyl-AMP is bound by residues glycine 332, threonine 336, methionine 344, aspartate 420, arginine 435, lysine 437, and lysine 441. (E)-caffeoyl-AMP is bound by residues glycine 332, threonine 336, methionine 344, aspartate 420, arginine 435, lysine 437, and lysine 441. 7 residues coordinate (E)-feruloyl-AMP: glycine 332, threonine 336, methionine 344, aspartate 420, arginine 435, lysine 437, and lysine 441. Residues glycine 332 and threonine 336 each coordinate AMP. Residues 332-399 are SBD2; that stretch reads GYGMTEAGPV…IRGDQIMKGY (68 aa). Residues aspartate 420 and arginine 435 each contribute to the ATP site. Position 420 (aspartate 420) interacts with AMP. AMP contacts are provided by lysine 437 and lysine 441. 2 residues coordinate CoA: lysine 443 and glycine 444. Glutamine 446 contributes to the AMP binding site. Residue lysine 526 coordinates ATP.

This sequence belongs to the ATP-dependent AMP-binding enzyme family. The cofactor is Mg(2+). Mainly expressed in old stems and, to a lower extent, in flowers (e.g. in ovary), leaves, young stems, shoot tips and patel limbs.

The enzyme catalyses (E)-4-coumarate + ATP + CoA = (E)-4-coumaroyl-CoA + AMP + diphosphate. It catalyses the reaction (E)-caffeate + ATP + CoA = (E)-caffeoyl-CoA + AMP + diphosphate. It carries out the reaction (E)-ferulate + ATP + CoA = (E)-feruloyl-CoA + AMP + diphosphate. The catalysed reaction is (E)-cinnamate + ATP + CoA = (E)-cinnamoyl-CoA + AMP + diphosphate. The enzyme catalyses (E)-4-coumarate + ATP + H(+) = (E)-4-coumaroyl-AMP + diphosphate. It catalyses the reaction (E)-4-coumaroyl-AMP + CoA = (E)-4-coumaroyl-CoA + AMP + H(+). It carries out the reaction (E)-caffeate + ATP + H(+) = (E)-caffeoyl-AMP + diphosphate. The catalysed reaction is (E)-caffeoyl-AMP + CoA = (E)-caffeoyl-CoA + AMP + H(+). The enzyme catalyses (E)-ferulate + ATP + H(+) = (E)-feruloyl-AMP + diphosphate. It catalyses the reaction (E)-feruloyl-AMP + CoA = (E)-feruloyl-CoA + AMP + H(+). It participates in phytoalexin biosynthesis; 3,4',5-trihydroxystilbene biosynthesis; 3,4',5-trihydroxystilbene from trans-4-coumarate: step 1/2. Functionally, major enzyme of the phenylpropanoid pathway that mediates the production of several precursors for numerous metabolites and regulates carbon flow. Catalyzes the formation of CoA thioesters using 4-coumarate, ferulate, caffeate, and cinnamate as substrates. Follows a two-step reaction mechanism, wherein a (hydroxy)cinnamate substrate first undergoes adenylation by ATP leading to an acyl-AMP, followed by a thioesterification in the presence of CoA to yield the final (hydroxy)cinnamoyl-CoA product. Almost inactive toward sinapate. The polypeptide is 4-coumarate--CoA ligase 2 (Nicotiana tabacum (Common tobacco)).